We begin with the raw amino-acid sequence, 352 residues long: MEVDPAEQIEKAGTLITIEGLKKDDYDKAIVNFLALREDLQLLAASPKGDVYRNTSGNGAEIFLNGMKIATDEDFLFSYHIKEPNKKLQRSLNRENKNLPRDCYRENIITILKSNINNRTQTLIDELIDSRDQYDNGEWSFIDVKKLIGLNTNRNILWADSSSKNIEKLIYSLYGMDTKKYEILALNSLQYRSMENDDRLKKQTLMHVSEKLKQQRIEEEAEKIKVKEQKPRKRFEEEDLPIEDLNPIEREGWDWAMEKARELCGFIRGWEKLYEEYQFVLMEKNHKYVGLCYTDQKIIKLSRGILKDEYSLLNTLVHEICHATTNGRDGTKKFERGLTDAFHPLFKLGQSK.

The protein to M.pneumoniae MPN_633 (in the N-terminal section), and M.pneumoniae MPN_634 (in the C-terminal section).

This is an uncharacterized protein from Mycoplasma pneumoniae (strain ATCC 29342 / M129 / Subtype 1) (Mycoplasmoides pneumoniae).